The following is a 75-amino-acid chain: Probable pilin MJ0431 (75 aa).

Residues 1–15 constitute a propeptide that is removed on maturation; the sequence is MGKMKILKKLLSKKG. The QXSXEXXXL motif lies at 16–24; sequence QLSMEVGVL.

In terms of processing, the N-terminus is cleaved by the prepilin peptidase EppA, which recognizes the class III signal sequence.

The protein resides in the secreted. The protein localises to the cell surface. Its subcellular location is the fimbrium. The chain is Probable pilin MJ0431 from Methanocaldococcus jannaschii (strain ATCC 43067 / DSM 2661 / JAL-1 / JCM 10045 / NBRC 100440) (Methanococcus jannaschii).